The sequence spans 30 residues: Dermaseptin-3.1TR (30 aa).

In terms of tissue distribution, expressed by the skin glands.

It is found in the secreted. In terms of biological role, has antimicrobial activity. This Phyllomedusa trinitatis (Trinidad leaf frog) protein is Dermaseptin-3.1TR.